A 257-amino-acid polypeptide reads, in one-letter code: Imidazole glycerol phosphate synthase subunit HisF (257 aa).

Catalysis depends on residues D11 and D130.

The protein belongs to the HisA/HisF family. In terms of assembly, heterodimer of HisH and HisF.

It localises to the cytoplasm. It carries out the reaction 5-[(5-phospho-1-deoxy-D-ribulos-1-ylimino)methylamino]-1-(5-phospho-beta-D-ribosyl)imidazole-4-carboxamide + L-glutamine = D-erythro-1-(imidazol-4-yl)glycerol 3-phosphate + 5-amino-1-(5-phospho-beta-D-ribosyl)imidazole-4-carboxamide + L-glutamate + H(+). It functions in the pathway amino-acid biosynthesis; L-histidine biosynthesis; L-histidine from 5-phospho-alpha-D-ribose 1-diphosphate: step 5/9. IGPS catalyzes the conversion of PRFAR and glutamine to IGP, AICAR and glutamate. The HisF subunit catalyzes the cyclization activity that produces IGP and AICAR from PRFAR using the ammonia provided by the HisH subunit. The protein is Imidazole glycerol phosphate synthase subunit HisF of Shewanella putrefaciens (strain CN-32 / ATCC BAA-453).